The chain runs to 195 residues: Small ribosomal subunit protein uS5 (195 aa).

Positions 22 to 85 constitute an S5 DRBM domain; that stretch reads IVEKLVHINR…EEAKKSMIRV (64 aa). The disordered stretch occupies residues 164 to 195; sequence QVAAKRGKKVSDVIGRRADGASAAQPAADAEG. Basic and acidic residues predominate over residues 172-182; the sequence is KVSDVIGRRAD. The segment covering 183–195 has biased composition (low complexity); sequence GASAAQPAADAEG.

Belongs to the universal ribosomal protein uS5 family. In terms of assembly, part of the 30S ribosomal subunit. Contacts proteins S4 and S8.

With S4 and S12 plays an important role in translational accuracy. In terms of biological role, located at the back of the 30S subunit body where it stabilizes the conformation of the head with respect to the body. This is Small ribosomal subunit protein uS5 from Phenylobacterium zucineum (strain HLK1).